Here is a 2136-residue protein sequence, read N- to C-terminus: Methylcytosine dioxygenase TET1 (2136 aa).

2 stretches are compositionally biased toward basic residues: residues 1–12 and 20–31; these read MSRSRHARPSRL and KKKKNSQLRKTT. Residues 1-47 are disordered; that stretch reads MSRSRHARPSRLVRKEDVNKKKKNSQLRKTTKGANKNVASVKTLSPG. Residues 32–43 show a composition bias toward polar residues; that stretch reads KGANKNVASVKT. The tract at residues 528–674 is sufficient for binding to genomic CpG islands; sequence LGIAQLSQAG…NGPKSESMDY (147 aa). The CXXC-type zinc finger occupies 584–625; the sequence is EKKKRKRCGVCEPCQQKTNCGECTYCKNRKNSHQICKKRKCE. 8 residues coordinate Zn(2+): C591, C594, C597, C603, C606, C609, C619, and C624. Basic and acidic residues-rich tracts occupy residues 712 to 724, 732 to 743, and 849 to 869; these read QNKKSQLTDHVKG, EAEKSKNSEVDK, and IHNEGDQPKTPENIPSKEPKD. 4 disordered regions span residues 712–746, 849–876, 899–923, and 1119–1169; these read QNKKSQLTDHVKGDFSANVPEAEKSKNSEVDKKRT, IHNEGDQPKTPENIPSKEPKDGSPVQPS, QLSEAPSENSSPSKSEKDEESEQRT, and EKGT…VSYQ. S871 is subject to Phosphoserine. Low complexity predominate over residues 901-911; that stretch reads SEAPSENSSPS. Residues 1119 to 1139 are compositionally biased toward polar residues; the sequence is EKGTIQQKPPSSVHNNHGSSL. A compositionally biased stretch (basic residues) spans 1146-1163; that stretch reads TQKKTKSTPSRDRRKKKP. Positions 1422, 1424, 1482, 1508, and 1510 each coordinate Zn(2+). R1551 contacts 2-oxoglutarate. Zn(2+) contacts are provided by C1561, C1563, C1579, and C1588. The interval 1580–1593 is interaction with DNA; that stretch reads SWSMYFNGCKFGRS. A Glycyl lysine isopeptide (Lys-Gly) (interchain with G-Cter in ubiquitin) cross-link involves residue K1589. Zn(2+) is bound at residue C1648. Residue C1664 participates in 2-oxoglutarate binding. H1670 contacts Zn(2+). Residues H1672 and D1674 each contribute to the Fe cation site. N1677 serves as a coordination point for substrate. H1706 provides a ligand contact to 2-oxoglutarate. Disordered regions lie at residues 1774-1897 and 1919-1984; these read EKKP…AAAD and EPLI…SPAE. Over residues 1786-1800 the composition is skewed to low complexity; that stretch reads NSTTTNNSKPSSLPT. Polar residues-rich tracts occupy residues 1824 to 1833 and 1937 to 1953; these read SSDNTKTYSL and HQPNHQPSFLTSPQDLA. Residues 1957-1976 show a composition bias toward acidic residues; the sequence is MEEDEQHSEADEPPSDEPLS. H2028 lines the Fe cation pocket. Residue 2043–2045 participates in 2-oxoglutarate binding; that stretch reads RLS. 2049–2051 is a substrate binding site; sequence YQH. H2059 contributes to the Zn(2+) binding site. Over residues 2074–2087 the composition is skewed to basic and acidic residues; it reads KNKKMKASEQKDQA. Residues 2074–2100 form a disordered region; sequence KNKKMKASEQKDQAANEGPEQSSEVNE.

Belongs to the TET family. In terms of assembly, interacts with SIN3A; recruits the transcriptional corepressor SIN3A to gene promoters. Interacts with HCFC1. Interacts (via C-terminus) with OGT. Found in a complex composed of at least SINHCAF, SIN3A, HDAC1, SAP30, RBBP4, OGT and TET1. Interacts with QSER1. Interacts with NONO (via DNA-binding domain); this interaction recruits TET1 to genomic loci. Interacts with FOXA2; this interaction may recruit TET1 to specific enhancers to preserve their unmethylated status and hence allowing gene expression. Interacts with RNF2. Directly interacts (via C-terminus) with the DCAF1 component of the CRL4(VprBP) E3 ubiquitin-protein ligase complex. As to quaternary structure, interacts with UHRF1; this interaction induces the recruitment of TET1 to replicating heterochromatin. Interacts with DCAF1. Fe(2+) is required as a cofactor. Requires Zn(2+) as cofactor. Glycosylated. Interaction with OGT leads to GlcNAcylation. Post-translationally, monoubiquitinated at Lys-1589 by the DCX (DDB1-CUL4-X-box) E3 ubiquitin-protein ligase complex called CRL4(VprBP) or CUL4A-RBX1-DDB1-DCAF1/VPRBP complex; this modification promotes binding to DNA. As to expression, expressed in fetal heart, lung and brain, and in adult skeletal muscle, thymus and ovary. Not detected in adult heart, lung or brain. Up-regulated in glioblastoma cells (at protein level). In terms of tissue distribution, expressed in embryonic stem cells (at protein level).

It localises to the nucleus. The protein resides in the chromosome. The enzyme catalyses a 5-methyl-2'-deoxycytidine in DNA + 2-oxoglutarate + O2 = a 5-hydroxymethyl-2'-deoxycytidine in DNA + succinate + CO2. It catalyses the reaction a 5-hydroxymethyl-2'-deoxycytidine in DNA + 2-oxoglutarate + O2 = a 5-formyl-2'-deoxycytidine in DNA + succinate + CO2 + H2O. It carries out the reaction a 5-formyl-2'-deoxycytidine in DNA + 2-oxoglutarate + O2 = a 5-carboxyl-2'-deoxycytidine in DNA + succinate + CO2 + H(+). In terms of biological role, dioxygenase that plays a key role in active DNA demethylation, by catalyzing the sequential oxidation of the modified genomic base 5-methylcytosine (5mC) into 5-hydroxymethylcytosine (5hmC), 5-formylcytosine (5fC), and 5-carboxylcytosine (5caC). In addition to its role in DNA demethylation, plays a more general role in chromatin regulation by recruiting histone modifying protein complexes to alter histone marks and chromatin accessibility, leading to both activation and repression of gene expression. Plays therefore a role in many biological processes, including stem cell maintenance, T- and B-cell development, inflammation regulation, genomic imprinting, neural activity or DNA repair. Involved in the balance between pluripotency and lineage commitment of cells and plays a role in embryonic stem cells maintenance and inner cell mass cell specification. Together with QSER1, plays an essential role in the protection and maintenance of transcriptional and developmental programs to inhibit the binding of DNMT3A/3B and therefore de novo methylation. May play a role in pancreatic beta-cell specification during development. In this context, may function as an upstream epigenetic regulator of PAX4 presumably through direct recruitment by FOXA2 to a PAX4 enhancer to preserve its unmethylated status, thereby potentiating PAX4 expression to adopt beta-cell fate during endocrine lineage commitment. Under DNA hypomethylation conditions, such as in female meiotic germ cells, may induce epigenetic reprogramming of pericentromeric heterochromatin (PCH), the constitutive heterochromatin of pericentromeric regions. PCH forms chromocenters in the interphase nucleus and chromocenters cluster at the prophase of meiosis. In this context, may also be essential for chromocenter clustering in a catalytic activity-independent manner, possibly through the recruitment polycomb repressive complex 1 (PRC1) to the chromocenters. During embryonic development, may be required for normal meiotic progression in oocytes and meiotic gene activation. Binds preferentially to DNA containing cytidine-phosphate-guanosine (CpG) dinucleotides over CpH (H=A, T, and C), hemimethylated-CpG and hemimethylated-hydroxymethyl-CpG. Dioxygenase that plays a key role in active DNA demethylation. Binds to promoters, particularly to those with high CG content. In hippocampal neurons, isoform 1 regulates the expression of a unique subset of genes compared to isoform 2, although some overlap exists between both isoforms, hence differentially regulates excitatory synaptic transmission. In hippocampal neuron cell cultures, isoform 1 controls both miniature excitatory postsynaptic current amplitude and frequency. Isoform 1 may regulate genes involved in hippocampal-dependent memory, leading to positive regulation of memory, contrary to isoform 2 that may decrease memory. Functionally, dioxygenase that plays a key role in active DNA demethylation. As isoform 1, binds to promoters, particularly to those with high CG content, however displays reduced global chromatin affinity compared with isoform 1, leading to decreased global DNA demethylation compared with isoform 1. Contrary to isoform 1, isoform 2 localizes during S phase to sites of ongoing DNA replication in heterochromatin, causing a significant de novo 5hmC formation, globally, and more so in heterochromatin, including LINE 1 interspersed DNA repeats leading to their activation. In hippocampal neurons, isoform 2 regulates the expression of a unique subset of genes compared to isoform 1, although some overlap between both isoforms, hence differentially regulates excitatory synaptic transmission. In hippocampal neuron cell cultures, isoform 2 controls miniature excitatory postsynaptic current frequency, but not amplitude. Isoform 2 may regulate genes involved in hippocampal-dependent memory, leading to negative regulation of memory, contrary to isoform 1 that may improve memory. In immature and partially differentiated gonadotrope cells, directly represses luteinizing hormone gene LHB expression and does not catalyze 5hmC at the gene promoter. This is Methylcytosine dioxygenase TET1 from Homo sapiens (Human).